We begin with the raw amino-acid sequence, 525 residues long: Histidine-rich glycoprotein (525 aa).

Residues 1–18 form the signal peptide; sequence MKVLTTALLLVTLQCSHA. Residues 19 to 122 form the Cystatin 1 domain; that stretch reads LSPTNCDASK…ESQDLSVNGY (104 aa). 5 disulfides stabilise this stretch: C24/C504, C78/C89, C103/C124, C201/C414, and C216/C239. The interval 41–84 is interaction with ATP5F1A; the sequence is GRRSGYTFQLLRVSDAHLDRVETATIYYLVLDVVESDCWVLSTK. 2 N-linked (GlcNAc...) asparagine glycosylation sites follow: N112 and N123. The 106-residue stretch at 135–240 folds into the Cystatin 2 domain; it reads NTKDSPVLVD…TPEYTDLICE (106 aa). S145 bears the Phosphoserine mark. N200 is a glycosylation site (N-linked (GlcNAc...) asparagine). Positions 275-445 are disordered; it reads RDHHHTHKTH…GHSRKRGPGK (171 aa). N-linked (GlcNAc...) asparagine glycosylation is found at N322 and N330. 2 stretches are compositionally biased toward basic residues: residues 339 to 392 and 426 to 443; these read HGQH…HGHH and QYHRGHGPPHGHSRKRGP. Residue S438 is modified to Phosphoserine.

In terms of assembly, interacts with THBS1 (via the TSP type I repeats); the interaction blocks the antiangiogenic effect of THBS1 with CD36. Interacts with HPSE; the interaction is enhanced at acidic pH, partially inhibits binding of HPSE to cell surface receptors and modulates its enzymatic activity. Interacts (via the HRR domain) with TMP1; the interaction partially mediates the antiangiogenic properties of HRG. Interacts with kappa and lambda light chains of IgG molecules. Interacts with ATP5F1A; the interaction occurs on the surface of T-cells and alters their cell morphology in concert with CONA. Binds IgG molecules containing kappa and lambda light chains and inhibits the formation of insoluble immunoglobulin complexes. Interacts with F12; the interaction, which is enhanced in the presence of zinc ions and inhibited by heparin-binding to HRG, inhibits factor XII autoactivation and contact-initiated coagulation. Interacts with PLG (via its Kringle domains); the interaction tethers PLG to the cell surface and enhances its activation. Interacts (via the HRR domain) with TPM1; the interaction appears to contribute to the antiangiogenic properties of the HRR domain. Interacts with THBS2; the interaction blocks the antiangiogenic effect of THBS2 with CD36. Post-translationally, N-glycosylated. Proteolytic cleavage produces several HRG fragments which are mostly disulfide-linked and, therefore, not released. Cleavage by plasmin is inhibited in the presence of heparin, zinc ions or in an acidic environment. Cleavage reduces binding of HRG to heparan sulfate, but enhances the ability of HRG to bind and tether plasminogen to the cell surface. On platelet activation, releases a 33 kDa antiangiogenic peptide which encompasses the HRR. Also cleaved in the C-terminal by plasmin. In terms of tissue distribution, expressed in liver, blood plasma, serum and in platelets. Also present in fibrin clots, wound fluid from acute wounds and chronic leg ulcers.

Its subcellular location is the secreted. Its function is as follows. Plasma glycoprotein that binds a number of ligands such as heme, heparin, heparan sulfate, thrombospondin, plasminogen, and divalent metal ions. Inhibits rosette formation. Acts as an adapter protein and implicated in regulating many processes such as immune complex and pathogen clearance, cell adhesion, angiogenesis, coagulation and fibrinolysis. Mediates clearance of necrotic cells through enhancing the phagocytosis of necrotic cells in a heparan sulfate-dependent pathway. This process can be regulated by the presence of certain HRG ligands such as heparin and zinc ions. Binds to IgG subclasses of immunoglobins containing kappa and lambda light chains with different affinities regulating their clearance and inhibiting the formation of insoluble immune complexes. Tethers plasminogen to the cell surface. Binds T-cells and alters the cell morphology. Modulates angiogenesis by blocking the CD6-mediated antiangiongenic effect of thrombospondins, THBS1 and THBS2. The protein is Histidine-rich glycoprotein (Hrg) of Rattus norvegicus (Rat).